We begin with the raw amino-acid sequence, 446 residues long: DNA repair protein RadA (446 aa).

The C4-type zinc finger occupies C10–C27. G96–S103 serves as a coordination point for ATP. Positions K253 to G257 match the RadA KNRFG motif motif. The tract at residues D349–M446 is lon-protease-like.

This sequence belongs to the RecA family. RadA subfamily.

Its function is as follows. DNA-dependent ATPase involved in processing of recombination intermediates, plays a role in repairing DNA breaks. Stimulates the branch migration of RecA-mediated strand transfer reactions, allowing the 3' invading strand to extend heteroduplex DNA faster. Binds ssDNA in the presence of ADP but not other nucleotides, has ATPase activity that is stimulated by ssDNA and various branched DNA structures, but inhibited by SSB. Does not have RecA's homology-searching function. The sequence is that of DNA repair protein RadA from Campylobacter jejuni subsp. jejuni serotype O:2 (strain ATCC 700819 / NCTC 11168).